A 99-amino-acid chain; its full sequence is Large ribosomal subunit protein bL28 (99 aa).

Belongs to the bacterial ribosomal protein bL28 family.

In Rhizobium etli (strain CIAT 652), this protein is Large ribosomal subunit protein bL28.